A 219-amino-acid polypeptide reads, in one-letter code: MASASEPPASPRDAADQNFDYMFKLLLIGNSSVGKTSFLFRYADDSFTPAFVSTVGIDFKVKTVYRHDKRIKLQIWDTAGQERYRTITTAYYRGAMGFLLMYDIANQESFTAVQDWATQIKTYSWDNAQVILVGNKCDLEDERVVPAEDGRRLADDLGFEFFEASAKENINVKQVFERLVDIICDKMNESLEPSSSPGSNGKGPALGDTPPPQPSSCSC.

Position 2 is an N-acetylalanine (Ala2). GDP is bound at residue Gly29–Ser37. 9 residues coordinate GTP: Ser31, Ser32, Val33, Gly34, Lys35, Thr36, Ser37, Pro49, and Ser53. Thr36 serves as a coordination point for Mg(2+). Positions Pro49–Asp58 match the Switch 1 motif. 2 residues coordinate Mg(2+): Thr54 and Asp77. GTP is bound at residue Gly80. The Switch 2 signature appears at Gly80–Met96. Thr86 carries the phosphothreonine; by LRRK2 modification. 5 residues coordinate GTP: Asn135, Lys136, Asp138, Ala166, and Lys167. GDP is bound by residues Asn135–Asp138 and Ser165–Lys167. Ser190 bears the Phosphoserine mark. The tract at residues Ser190–Cys219 is disordered. Residues Pro193–Gly203 show a composition bias toward low complexity. Residues Thr209–Cys219 show a composition bias toward pro residues. S-geranylgeranyl cysteine attachment occurs at residues Cys217 and Cys219. Cysteine methyl ester is present on Cys219.

The protein belongs to the small GTPase superfamily. Rab family. In terms of assembly, interacts with RIMS1, RIMS2, RPH3A, RPH3AL and RAB3IP. The GTP-bound form interacts with REP15. Interacts with CHM and CHML; phosphorylation at Thr-86 disrupts these interactions. Interacts with MADD (via uDENN domain); the GTP-bound form is preferred for interaction. Mg(2+) is required as a cofactor. Post-translationally, phosphorylation of Thr-86 in the switch II region by LRRK2 prevents the association of RAB regulatory proteins, including CHM and CHML. As to expression, predominantly expressed in the adipocyte tissue, but is also expressed in several other organs including skin, spleen, heart and lung.

Its subcellular location is the cell membrane. It carries out the reaction GTP + H2O = GDP + phosphate + H(+). With respect to regulation, regulated by guanine nucleotide exchange factors (GEFs) which promote the exchange of bound GDP for free GTP. Regulated by GTPase activating proteins (GAPs) which increase the GTP hydrolysis activity. Inhibited by GDP dissociation inhibitors (GDIs) which prevent Rab-GDP dissociation. The small GTPases Rab are key regulators of intracellular membrane trafficking, from the formation of transport vesicles to their fusion with membranes. Rabs cycle between an inactive GDP-bound form and an active GTP-bound form that is able to recruit to membranes different sets of downstream effectors directly responsible for vesicle formation, movement, tethering and fusion. RAB3D may be involved in the insulin-induced exocytosis of GLUT4-containing vesicles in adipocytes. This Mus musculus (Mouse) protein is Ras-related protein Rab-3D.